We begin with the raw amino-acid sequence, 215 residues long: MKLNRYLDHTLLKPEATEQQIDQVVREALENHFYSVMVNPYWVKHVHAQLAGSDVATACVIGFPLGANTTAIKVAEAKQAIADGVDELDMVINIGELKGDHYDAVQQDIESVVTVGHTADKVVKVIIETALLTDGEIVKASEIVADAHADFVKTSTGFSTRGASVHDISLMKGAVQDRIGVKASGGIHTRDEALAMIDAGATRLGVSASMAIIGK.

Asp-89 serves as the catalytic Proton donor/acceptor. Lys-153 serves as the catalytic Schiff-base intermediate with acetaldehyde. Residue Lys-182 is the Proton donor/acceptor of the active site.

It belongs to the DeoC/FbaB aldolase family. DeoC type 1 subfamily.

Its subcellular location is the cytoplasm. The enzyme catalyses 2-deoxy-D-ribose 5-phosphate = D-glyceraldehyde 3-phosphate + acetaldehyde. The protein operates within carbohydrate degradation; 2-deoxy-D-ribose 1-phosphate degradation; D-glyceraldehyde 3-phosphate and acetaldehyde from 2-deoxy-alpha-D-ribose 1-phosphate: step 2/2. Catalyzes a reversible aldol reaction between acetaldehyde and D-glyceraldehyde 3-phosphate to generate 2-deoxy-D-ribose 5-phosphate. The sequence is that of Deoxyribose-phosphate aldolase from Lactiplantibacillus plantarum (strain ATCC BAA-793 / NCIMB 8826 / WCFS1) (Lactobacillus plantarum).